A 332-amino-acid polypeptide reads, in one-letter code: UDP-galactose/UDP-glucose transporter 1 (332 aa).

8 helical membrane passes run I11–L31, H49–I69, A80–I100, V112–I132, T135–L155, I206–P226, I252–A272, and W301–L317. Residues K327–S332 carry the Di-lysine motif motif.

This sequence belongs to the nucleotide-sugar transporter family. UDP-galactose:UMP antiporter (TC 2.A.7.11) subfamily.

Its subcellular location is the endoplasmic reticulum membrane. Functionally, essential sugar transporter required for the transport of UDP-galactose and UDP-glucose from the cytoplasm into the Golgi and the endoplasmic reticulum, to ensure quality control of protein folding. Essential for pollen development and involved in embryo sac progress. The protein is UDP-galactose/UDP-glucose transporter 1 of Arabidopsis thaliana (Mouse-ear cress).